A 189-amino-acid chain; its full sequence is dTTP/UTP pyrophosphatase (189 aa).

D71 acts as the Proton acceptor in catalysis.

This sequence belongs to the Maf family. YhdE subfamily. The cofactor is a divalent metal cation.

It is found in the cytoplasm. The enzyme catalyses dTTP + H2O = dTMP + diphosphate + H(+). It carries out the reaction UTP + H2O = UMP + diphosphate + H(+). In terms of biological role, nucleoside triphosphate pyrophosphatase that hydrolyzes dTTP and UTP. May have a dual role in cell division arrest and in preventing the incorporation of modified nucleotides into cellular nucleic acids. In Pseudoalteromonas translucida (strain TAC 125), this protein is dTTP/UTP pyrophosphatase.